The sequence spans 142 residues: MGNGLNAGRKLLENRKKFRWSDRDYKRRVLQLKRKSDPLEGAPQAKGIAIEKVGIEAKQPNSAIRKCVKVQLIKNGRQITAFAVGDGAINYIDEHDEVTVEGIGGRMGRSKGDIPGVRYKVVAVNGISLKELVKGRKEKTVR.

The protein belongs to the universal ribosomal protein uS12 family. In terms of assembly, part of the 30S ribosomal subunit.

Its function is as follows. With S4 and S5 plays an important role in translational accuracy. Located at the interface of the 30S and 50S subunits. The chain is Small ribosomal subunit protein uS12 from Thermoplasma volcanium (strain ATCC 51530 / DSM 4299 / JCM 9571 / NBRC 15438 / GSS1).